We begin with the raw amino-acid sequence, 457 residues long: Nuclear hormone receptor family member nhr-20 (457 aa).

A DNA-binding region (nuclear receptor) is located at residues 16–92 (TSKCLVCEHP…AGMRRECVQK (77 aa)). 2 consecutive NR C4-type zinc fingers follow at residues 19 to 40 (CLVCEHPDGGSAHFGSTSCLAC) and 56 to 80 (CKKDKNCVIFHELRMICRACRFDKC). Residues 125–182 (GDQTDDNSPLSIEKKSPPGLLPNDSPMMADFKFDPSDIPSTSGGSTQRLERSPSPKLA) form a disordered region. Over residues 162–171 (IPSTSGGSTQ) the composition is skewed to polar residues. The 257-residue stretch at 201–457 (QLKNSMDRRR…DALSKSLLTL (257 aa)) folds into the NR LBD domain.

It belongs to the nuclear hormone receptor family.

It localises to the nucleus. Functionally, orphan nuclear receptor. In Caenorhabditis elegans, this protein is Nuclear hormone receptor family member nhr-20 (nhr-20).